The primary structure comprises 180 residues: Der GTPase-activating protein YihI (180 aa).

2 disordered regions span residues 1-90 (MSRK…QERR) and 145-180 (EPEEDEDFTAPAVKGSRNDDDLLADFDDINFDDYKG). A compositionally biased stretch (basic and acidic residues) spans 23–32 (NRTESDVEGR). Over residues 33–43 (LRKRAKKRKGL) the composition is skewed to basic residues. Composition is skewed to basic and acidic residues over residues 50–68 (SDAEEQKRQAAAQKRDPRL) and 80–90 (PVKKQTKQERR). A compositionally biased stretch (acidic residues) spans 165 to 180 (DLLADFDDINFDDYKG).

It belongs to the YihI family. In terms of assembly, interacts with Der.

In terms of biological role, a GTPase-activating protein (GAP) that modifies Der/EngA GTPase function. May play a role in ribosome biogenesis. The chain is Der GTPase-activating protein YihI from Vibrio campbellii (strain ATCC BAA-1116).